Reading from the N-terminus, the 276-residue chain is Formamidopyrimidine-DNA glycosylase (276 aa).

The active-site Schiff-base intermediate with DNA is Pro-2. The active-site Proton donor is Glu-3. Lys-58 (proton donor; for beta-elimination activity) is an active-site residue. His-94, Arg-112, and Arg-157 together coordinate DNA. The FPG-type zinc-finger motif lies at 242 to 276; that stretch reads FVYDRAGEPCRVCGAPIRQIVQGQRSTYYCPNCQR. Residue Arg-266 is the Proton donor; for delta-elimination activity of the active site.

The protein belongs to the FPG family. In terms of assembly, monomer. Requires Zn(2+) as cofactor.

The enzyme catalyses Hydrolysis of DNA containing ring-opened 7-methylguanine residues, releasing 2,6-diamino-4-hydroxy-5-(N-methyl)formamidopyrimidine.. It catalyses the reaction 2'-deoxyribonucleotide-(2'-deoxyribose 5'-phosphate)-2'-deoxyribonucleotide-DNA = a 3'-end 2'-deoxyribonucleotide-(2,3-dehydro-2,3-deoxyribose 5'-phosphate)-DNA + a 5'-end 5'-phospho-2'-deoxyribonucleoside-DNA + H(+). Functionally, involved in base excision repair of DNA damaged by oxidation or by mutagenic agents. Acts as a DNA glycosylase that recognizes and removes damaged bases. Has a preference for oxidized purines, such as 7,8-dihydro-8-oxoguanine (8-oxoG). Has AP (apurinic/apyrimidinic) lyase activity and introduces nicks in the DNA strand. Cleaves the DNA backbone by beta-delta elimination to generate a single-strand break at the site of the removed base with both 3'- and 5'-phosphates. The sequence is that of Formamidopyrimidine-DNA glycosylase from Burkholderia thailandensis (strain ATCC 700388 / DSM 13276 / CCUG 48851 / CIP 106301 / E264).